Consider the following 218-residue polypeptide: MNSVTVSHAPYTITYHDDWEPVMNQLVEFYNEVASWLLRDETSPIPDKFFIQLKQPLRNKRVCVCGIDPYPKDGTGVPFESPNFTKKSIKEIASSISRLTGVIDYKGYNLNIIDGVIPWNYYLSCKLGETKSHAIYWDKISKLLLHHITKHVRFLYCLGKTDFSNIRAKLESPVTTIVGYHPAARDRQFEKDRSFEIINVLLELDNKAPINWAQGFIY.

Asp68 serves as the catalytic Proton acceptor.

The protein belongs to the uracil-DNA glycosylase (UDG) superfamily. UNG family. Homodimer. Interacts with protein OPG148. Component of the Uracil-DNA glycosylase(UDG)-OPG148-polymerase complex; OPG148 and UDG form a heterodimeric processivity factor that associates with OPG71 to form the processive polymerase holoenzyme.

The catalysed reaction is Hydrolyzes single-stranded DNA or mismatched double-stranded DNA and polynucleotides, releasing free uracil.. In terms of biological role, plays an essential role in viral replication as a component of the DNA polymerase processivity factor. Excises uracil residues from the DNA which can arise as a result of misincorporation of dUMP residues by DNA polymerase or due to deamination of cytosine. In Homo sapiens (Human), this protein is Uracil-DNA glycosylase (OPG116).